We begin with the raw amino-acid sequence, 269 residues long: Hydroxyethylthiazole kinase (269 aa).

Position 42 (Met-42) interacts with substrate. ATP is bound by residues Arg-118 and Ser-164. Gly-191 is a binding site for substrate.

The protein belongs to the Thz kinase family. The cofactor is Mg(2+).

The catalysed reaction is 5-(2-hydroxyethyl)-4-methylthiazole + ATP = 4-methyl-5-(2-phosphooxyethyl)-thiazole + ADP + H(+). It participates in cofactor biosynthesis; thiamine diphosphate biosynthesis; 4-methyl-5-(2-phosphoethyl)-thiazole from 5-(2-hydroxyethyl)-4-methylthiazole: step 1/1. Functionally, catalyzes the phosphorylation of the hydroxyl group of 4-methyl-5-beta-hydroxyethylthiazole (THZ). In Listeria welshimeri serovar 6b (strain ATCC 35897 / DSM 20650 / CCUG 15529 / CIP 8149 / NCTC 11857 / SLCC 5334 / V8), this protein is Hydroxyethylthiazole kinase.